Consider the following 144-residue polypeptide: MGLKLSGRYIFLVLAVHLAYLLQAVKAAGKCDAVFKGLSDCMLTLGDKVANYPQDLEEKKNLDTICSYWDDFHVCTVTALADCQEGASDIWEKLKRQSKNLNIQGSLFELCPGSTGAPGPRLLFPAFLPLLIVFLSALLNWVLQ.

The first 27 residues, 1-27, serve as a signal peptide directing secretion; it reads MGLKLSGRYIFLVLAVHLAYLLQAVKA. Ser114 carries the GPI-anchor amidated serine lipid modification. The propeptide at 115 to 144 is removed in mature form; it reads TGAPGPRLLFPAFLPLLIVFLSALLNWVLQ.

Belongs to the neuritin family.

The protein resides in the cell membrane. Its function is as follows. Modulates postsynaptic dendritic arbor elaboration and synaptic maturation. The sequence is that of Neuritin-B (nrn1-b) from Xenopus laevis (African clawed frog).